The sequence spans 394 residues: Protein BUR2 (394 aa).

Disordered regions lie at residues 1 to 32 and 372 to 394; these read MVLSASEEIANSQPSGNGKTSLDIKQNEGNPQ and MSERSIKRPSEPPAEQATKKPRF. Residues 9–32 show a composition bias toward polar residues; the sequence is IANSQPSGNGKTSLDIKQNEGNPQ. Residues 372–381 are compositionally biased toward basic and acidic residues; it reads MSERSIKRPS.

In terms of assembly, belongs to the BUR kinase complex.

It is found in the nucleus. Its function is as follows. Component of the BUR kinase complex involved in transcription regulation. This complex phosphorylates the UBC2/RAD6 ubiquitin-conjugating enzyme (E2), leading to monoubiquitination of histone H2B and the silencing of telomeric-associated genes. Also required for histone H3 methylation. Necessary for the recovery from pheromone-induced growth arrest in the cell cycle G1 phase. The kinase activity of the complex requires the presence of BUR2. Overexpression of BUR2 interferes with mitotic chromosome segregation. The polypeptide is Protein BUR2 (BUR2) (Kluyveromyces lactis (strain ATCC 8585 / CBS 2359 / DSM 70799 / NBRC 1267 / NRRL Y-1140 / WM37) (Yeast)).